The primary structure comprises 317 residues: Anamorsin homolog (317 aa).

The segment at 1-192 (MREVLVVSES…ITGVRPNWKA (192 aa)) is N-terminal SAM-like domain. Residues 193 to 216 (KGDRKSSSIHAAPIDGYISKAPDY) are linker. The [2Fe-2S] cluster site is built by Cys219, Cys226, Cys229, and Cys231. The segment at 219 to 231 (CSTKPRACANCTC) is fe-S binding site A. [4Fe-4S] cluster is bound by residues Cys286, Cys289, Cys297, and Cys300. Short sequence motifs (cx2C motif) lie at residues 286–289 (CGNC) and 297–300 (CDSC). The fe-S binding site B stretch occupies residues 286–300 (CGNCYLGDAFRCDSC).

The protein belongs to the anamorsin family. Monomer. The cofactor is [2Fe-2S] cluster. Requires [4Fe-4S] cluster as cofactor.

Its subcellular location is the cytoplasm. The protein localises to the mitochondrion intermembrane space. Component of the cytosolic iron-sulfur (Fe-S) protein assembly (CIA) machinery. Required for the maturation of extramitochondrial Fe-S proteins. Part of an electron transfer chain functioning in an early step of cytosolic Fe-S biogenesis, facilitating the de novo assembly of a [4Fe-4S] cluster on the cytosolic Fe-S scaffold complex. Electrons are transferred from NADPH via a FAD- and FMN-containing diflavin oxidoreductase. Together with the diflavin oxidoreductase, also required for the assembly of the diferric tyrosyl radical cofactor of ribonucleotide reductase (RNR), probably by providing electrons for reduction during radical cofactor maturation in the catalytic small subunit. The chain is Anamorsin homolog from Theileria parva (East coast fever infection agent).